The sequence spans 1049 residues: Exotoxin PaxA (1049 aa).

The next 4 membrane-spanning stretches (helical) occupy residues 246–266 (GLGLDIISSLLSGVTASFTLA), 311–331 (GPAAALIASSISLAISPLSFL), 375–395 (ITTISTALSAIAAGTAAASAG), and 397–417 (LVGAPITLLVTGITGLISGIL). Hemolysin-type calcium-binding repeat units lie at residues 744 to 761 (KGSKFRDIFHGADGDDLL), 762 to 779 (NGNDGDDILYGDKGNDEL), 780 to 797 (RGDNGNDQLYGGEGNDKL), 798 to 815 (FGGNGNNYLSGGDGDDEL), 826 to 843 (RGGKGNDKLYGGAGSDFL), and 844 to 861 (DGGEGDDYLAGGEGNDFY).

This sequence belongs to the RTX prokaryotic toxin (TC 1.C.11) family.

The protein localises to the secreted. It localises to the host cell membrane. Functionally, paxA is associated with abortion cases in swine and septicemia in young piglets. Shows cohemolytic activity with the sphingomyelinase of S.aureus but is devoid of direct hemolytic activity. The polypeptide is Exotoxin PaxA (paxA) (Pasteurella aerogenes).